Here is a 373-residue protein sequence, read N- to C-terminus: Dual-specificity RNA methyltransferase RlmN (373 aa).

The active-site Proton acceptor is the Glu94. A Radical SAM core domain is found at Glu100–Asp339. Cysteines 107 and 344 form a disulfide. Residues Cys114, Cys118, and Cys121 each contribute to the [4Fe-4S] cluster site. S-adenosyl-L-methionine-binding positions include Gly168–Glu169, Ser200, Ser222–His224, and Asn301. Cys344 acts as the S-methylcysteine intermediate in catalysis.

Belongs to the radical SAM superfamily. RlmN family. [4Fe-4S] cluster serves as cofactor.

Its subcellular location is the cytoplasm. It catalyses the reaction adenosine(2503) in 23S rRNA + 2 reduced [2Fe-2S]-[ferredoxin] + 2 S-adenosyl-L-methionine = 2-methyladenosine(2503) in 23S rRNA + 5'-deoxyadenosine + L-methionine + 2 oxidized [2Fe-2S]-[ferredoxin] + S-adenosyl-L-homocysteine. It carries out the reaction adenosine(37) in tRNA + 2 reduced [2Fe-2S]-[ferredoxin] + 2 S-adenosyl-L-methionine = 2-methyladenosine(37) in tRNA + 5'-deoxyadenosine + L-methionine + 2 oxidized [2Fe-2S]-[ferredoxin] + S-adenosyl-L-homocysteine. Functionally, specifically methylates position 2 of adenine 2503 in 23S rRNA and position 2 of adenine 37 in tRNAs. m2A2503 modification seems to play a crucial role in the proofreading step occurring at the peptidyl transferase center and thus would serve to optimize ribosomal fidelity. This chain is Dual-specificity RNA methyltransferase RlmN, found in Shewanella baltica (strain OS155 / ATCC BAA-1091).